The sequence spans 304 residues: Acetaldehyde dehydrogenase 2 (304 aa).

The active-site Acyl-thioester intermediate is C131. NAD(+)-binding positions include 162–170 and N273; that span reads SAGPGTRKN.

This sequence belongs to the acetaldehyde dehydrogenase family.

The enzyme catalyses acetaldehyde + NAD(+) + CoA = acetyl-CoA + NADH + H(+). This Dechloromonas aromatica (strain RCB) protein is Acetaldehyde dehydrogenase 2.